The primary structure comprises 271 residues: Acyl-[acyl-carrier-protein]--UDP-N-acetylglucosamine O-acyltransferase (271 aa).

It belongs to the transferase hexapeptide repeat family. LpxA subfamily. Homotrimer.

It is found in the cytoplasm. The enzyme catalyses a (3R)-hydroxyacyl-[ACP] + UDP-N-acetyl-alpha-D-glucosamine = a UDP-3-O-[(3R)-3-hydroxyacyl]-N-acetyl-alpha-D-glucosamine + holo-[ACP]. It participates in glycolipid biosynthesis; lipid IV(A) biosynthesis; lipid IV(A) from (3R)-3-hydroxytetradecanoyl-[acyl-carrier-protein] and UDP-N-acetyl-alpha-D-glucosamine: step 1/6. Its function is as follows. Involved in the biosynthesis of lipid A, a phosphorylated glycolipid that anchors the lipopolysaccharide to the outer membrane of the cell. This is Acyl-[acyl-carrier-protein]--UDP-N-acetylglucosamine O-acyltransferase from Azorhizobium caulinodans (strain ATCC 43989 / DSM 5975 / JCM 20966 / LMG 6465 / NBRC 14845 / NCIMB 13405 / ORS 571).